Here is a 149-residue protein sequence, read N- to C-terminus: Calmodulin (149 aa).

A2 is modified (N-acetylalanine). 4 consecutive EF-hand domains span residues 8–43 (EQIA…LGQN), 44–79 (PTEA…KMKD), 81–116 (DSEE…LGEK), and 117–149 (LTDE…MLAK). Ca(2+)-binding residues include D21, D23, D25, C27, E32, D57, D59, N61, T63, E68, D94, D96, N98, and E105. K116 bears the N6,N6,N6-trimethyllysine mark. Residues D130, D132, D134, Q136, and E141 each contribute to the Ca(2+) site.

It belongs to the calmodulin family.

Its function is as follows. Calmodulin mediates the control of a large number of enzymes, ion channels and other proteins by Ca(2+). Among the enzymes to be stimulated by the calmodulin-Ca(2+) complex are a number of protein kinases and phosphatases. In Solanum lycopersicum (Tomato), this protein is Calmodulin (CALM1).